A 311-amino-acid chain; its full sequence is DNA repair and recombination protein RadA (311 aa).

104 to 111 (GEFGSGKS) lines the ATP pocket.

It belongs to the eukaryotic RecA-like protein family.

In terms of biological role, involved in DNA repair and in homologous recombination. Binds and assemble on single-stranded DNA to form a nucleoprotein filament. Hydrolyzes ATP in a ssDNA-dependent manner and promotes DNA strand exchange between homologous DNA molecules. This Methanosphaera stadtmanae (strain ATCC 43021 / DSM 3091 / JCM 11832 / MCB-3) protein is DNA repair and recombination protein RadA.